The sequence spans 250 residues: Proteasome subunit alpha type-4-1 (250 aa).

It belongs to the peptidase T1A family. In terms of assembly, the 26S proteasome consists of a 20S proteasome core and two 19S regulatory subunits. The 20S proteasome core is composed of 28 subunits that are arranged in four stacked rings, resulting in a barrel-shaped structure. The two end rings are each formed by seven alpha subunits, and the two central rings are each formed by seven beta subunits. The catalytic chamber with the active sites is on the inside of the barrel.

Its subcellular location is the cytoplasm. The protein resides in the nucleus. The proteasome is a multicatalytic proteinase complex which is characterized by its ability to cleave peptides with Arg, Phe, Tyr, Leu, and Glu adjacent to the leaving group at neutral or slightly basic pH. The proteasome has an ATP-dependent proteolytic activity. The polypeptide is Proteasome subunit alpha type-4-1 (Oryza sativa subsp. indica (Rice)).